A 561-amino-acid polypeptide reads, in one-letter code: Tectonic-like complex member MKS1 (561 aa).

In terms of domain architecture, C2 B9-type spans 314–442 (LRLFVNGEVV…TASTWRPMEL (129 aa)).

Part of the tectonic-like complex (also named B9 complex). Interacts with TMEM107. Interacts with TCTN3, AHI1, TCTN1, TCTN2, CC2D2A. Interacts with FLNA. Interacts with TMEM67. Interacts with B9D1 and B9D2.

It is found in the cytoplasm. It localises to the cytoskeleton. Its subcellular location is the cilium basal body. The protein localises to the microtubule organizing center. The protein resides in the centrosome. Component of the tectonic-like complex, a complex localized at the transition zone of primary cilia and acting as a barrier that prevents diffusion of transmembrane proteins between the cilia and plasma membranes. Involved in centrosome migration to the apical cell surface during early ciliogenesis. Required for ciliary structure and function, including a role in regulating length and appropriate number through modulating centrosome duplication. Required for cell branching morphology. The sequence is that of Tectonic-like complex member MKS1 (Mks1) from Rattus norvegicus (Rat).